The primary structure comprises 261 residues: Glucanase inhibitor protein 3 (261 aa).

Positions 1–21 (MKVLSSLAAALIALSAVDVEA) are cleaved as a signal peptide. A Peptidase S1 domain is found at 29 to 260 (ILGGGKVPVG…GIEWINSVIK (232 aa)). Residues C56 and C72 are joined by a disulfide bond. An N-linked (GlcNAc...) asparagine glycan is attached at N108. Intrachain disulfides connect C183-C195 and C205-C236.

The protein belongs to the peptidase S1 family.

The protein localises to the secreted. Functionally, secreted effector that suppresses host plant glucan elicitor-mediated defense responses. Targets host endoglucanases and inhibits the endoglucanase-mediated release of elicitor-active glucan oligosaccharides from P.sojae cell walls. This Phytophthora sojae (strain P6497) (Soybean stem and root rot agent) protein is Glucanase inhibitor protein 3 (GIP3).